Here is a 122-residue protein sequence, read N- to C-terminus: Large ribosomal subunit protein uL24 (122 aa).

The protein belongs to the universal ribosomal protein uL24 family. As to quaternary structure, part of the 50S ribosomal subunit.

Its function is as follows. One of two assembly initiator proteins, it binds directly to the 5'-end of the 23S rRNA, where it nucleates assembly of the 50S subunit. Functionally, one of the proteins that surrounds the polypeptide exit tunnel on the outside of the subunit. The protein is Large ribosomal subunit protein uL24 of Renibacterium salmoninarum (strain ATCC 33209 / DSM 20767 / JCM 11484 / NBRC 15589 / NCIMB 2235).